Reading from the N-terminus, the 152-residue chain is Deoxyuridine 5'-triphosphate nucleotidohydrolase (152 aa).

Residues 71 to 73, N84, 88 to 90, and M98 contribute to the substrate site; these read RSG and LID.

Belongs to the dUTPase family. Mg(2+) is required as a cofactor.

It catalyses the reaction dUTP + H2O = dUMP + diphosphate + H(+). Its pathway is pyrimidine metabolism; dUMP biosynthesis; dUMP from dCTP (dUTP route): step 2/2. In terms of biological role, this enzyme is involved in nucleotide metabolism: it produces dUMP, the immediate precursor of thymidine nucleotides and it decreases the intracellular concentration of dUTP so that uracil cannot be incorporated into DNA. The chain is Deoxyuridine 5'-triphosphate nucleotidohydrolase from Cronobacter sakazakii (strain ATCC BAA-894) (Enterobacter sakazakii).